A 392-amino-acid polypeptide reads, in one-letter code: Nicotinate phosphoribosyltransferase (392 aa).

Residue His-216 is modified to Phosphohistidine; by autocatalysis.

The protein belongs to the NAPRTase family. Transiently phosphorylated on a His residue during the reaction cycle. Phosphorylation strongly increases the affinity for substrates and increases the rate of nicotinate D-ribonucleotide production. Dephosphorylation regenerates the low-affinity form of the enzyme, leading to product release.

It catalyses the reaction nicotinate + 5-phospho-alpha-D-ribose 1-diphosphate + ATP + H2O = nicotinate beta-D-ribonucleotide + ADP + phosphate + diphosphate. Its pathway is cofactor biosynthesis; NAD(+) biosynthesis; nicotinate D-ribonucleotide from nicotinate: step 1/1. Catalyzes the synthesis of beta-nicotinate D-ribonucleotide from nicotinate and 5-phospho-D-ribose 1-phosphate at the expense of ATP. This is Nicotinate phosphoribosyltransferase from Cupriavidus necator (strain ATCC 17699 / DSM 428 / KCTC 22496 / NCIMB 10442 / H16 / Stanier 337) (Ralstonia eutropha).